The sequence spans 226 residues: Glutathione peroxidase 3 (226 aa).

The first 24 residues, 1-24 (MARLFRASCLLSLLLAGFIPPSQG), serve as a signal peptide directing secretion. Sec-73 is a catalytic residue. Sec-73 is a non-standard amino acid (selenocysteine).

This sequence belongs to the glutathione peroxidase family. In terms of assembly, homotetramer. Secreted in plasma.

Its subcellular location is the secreted. The catalysed reaction is 2 glutathione + H2O2 = glutathione disulfide + 2 H2O. It carries out the reaction tert-butyl hydroperoxide + 2 glutathione = tert-butanol + glutathione disulfide + H2O. Functionally, protects cells and enzymes from oxidative damage, by catalyzing the reduction of hydrogen peroxide, lipid peroxides and organic hydroperoxide, by glutathione. The sequence is that of Glutathione peroxidase 3 from Bos taurus (Bovine).